A 223-amino-acid chain; its full sequence is Protein FAM3D (223 aa).

Residues 1–25 (MRVAGLIRVVVFIFTIVTMWVFLRS) form the signal peptide. Disulfide bonds link cysteine 54–cysteine 82 and cysteine 60–cysteine 217. One can recognise a GG-type lectin domain in the interval 62–221 (NNFFAFKISS…LELEGCVPRK (160 aa)). Residue asparagine 106 is glycosylated (N-linked (GlcNAc...) asparagine).

This sequence belongs to the FAM3 family.

The protein resides in the secreted. This is Protein FAM3D from Mus musculus (Mouse).